A 477-amino-acid polypeptide reads, in one-letter code: Ribulose bisphosphate carboxylase large chain (477 aa).

A propeptide spanning residues 1-2 (MS) is cleaved from the precursor. N-acetylproline is present on Pro3. Residue Lys14 is modified to N6,N6,N6-trimethyllysine. Residues Asn123 and Thr173 each contribute to the substrate site. Residue Lys175 is the Proton acceptor of the active site. Lys177 lines the substrate pocket. Lys201, Asp203, and Glu204 together coordinate Mg(2+). Lys201 carries the N6-carboxylysine modification. The Proton acceptor role is filled by His294. Residues Arg295, His327, and Ser379 each contribute to the substrate site.

Belongs to the RuBisCO large chain family. Type I subfamily. In terms of assembly, heterohexadecamer of 8 large chains and 8 small chains; disulfide-linked. The disulfide link is formed within the large subunit homodimers. Mg(2+) serves as cofactor. In terms of processing, the disulfide bond which can form in the large chain dimeric partners within the hexadecamer appears to be associated with oxidative stress and protein turnover.

The protein resides in the plastid. It is found in the chloroplast. The catalysed reaction is 2 (2R)-3-phosphoglycerate + 2 H(+) = D-ribulose 1,5-bisphosphate + CO2 + H2O. It carries out the reaction D-ribulose 1,5-bisphosphate + O2 = 2-phosphoglycolate + (2R)-3-phosphoglycerate + 2 H(+). In terms of biological role, ruBisCO catalyzes two reactions: the carboxylation of D-ribulose 1,5-bisphosphate, the primary event in carbon dioxide fixation, as well as the oxidative fragmentation of the pentose substrate in the photorespiration process. Both reactions occur simultaneously and in competition at the same active site. This is Ribulose bisphosphate carboxylase large chain from Manihot esculenta (Cassava).